Here is a 273-residue protein sequence, read N- to C-terminus: 3-methyl-2-oxobutanoate hydroxymethyltransferase (273 aa).

The Mg(2+) site is built by aspartate 53 and aspartate 92. 3-methyl-2-oxobutanoate contacts are provided by residues 53–54 (DS), aspartate 92, and lysine 122. A Mg(2+)-binding site is contributed by glutamate 124. The active-site Proton acceptor is the glutamate 191.

This sequence belongs to the PanB family. In terms of assembly, homodecamer; pentamer of dimers. The cofactor is Mg(2+).

The protein resides in the cytoplasm. The catalysed reaction is 3-methyl-2-oxobutanoate + (6R)-5,10-methylene-5,6,7,8-tetrahydrofolate + H2O = 2-dehydropantoate + (6S)-5,6,7,8-tetrahydrofolate. It functions in the pathway cofactor biosynthesis; (R)-pantothenate biosynthesis; (R)-pantoate from 3-methyl-2-oxobutanoate: step 1/2. Functionally, catalyzes the reversible reaction in which hydroxymethyl group from 5,10-methylenetetrahydrofolate is transferred onto alpha-ketoisovalerate to form ketopantoate. The chain is 3-methyl-2-oxobutanoate hydroxymethyltransferase from Bacteroides thetaiotaomicron (strain ATCC 29148 / DSM 2079 / JCM 5827 / CCUG 10774 / NCTC 10582 / VPI-5482 / E50).